A 279-amino-acid chain; its full sequence is MTDLQIAVDPTTDVEALILDWAGTVVDFGSFAPTSIFVEAFARAYDFPVTLDEARQPMGLGKWDHIAALGRLPSVDARWQARFGHPMSHAEVDHLYHTFMPLQIAAVTRFADPIPGVLPVLDALRGQGMKIGSCSGYPRPVMETLVPAAADHGYRPDHWVATDDLKAGGRPGPWMALANVIELGVNAVHRCIKVDDAVPGISEGLNAGMWTVGLSVSGNEFGATWEAFAAMSEAEIAARRAPAEAKLRAAGAHYVIDTLADIAPVIADINRRLAAGERP.

D20 functions as the Nucleophile in the catalytic mechanism. Residues D20 and A22 each coordinate Mg(2+). K62 acts as the Schiff-base intermediate with substrate in catalysis. D196 is a binding site for Mg(2+).

The protein belongs to the HAD-like hydrolase superfamily. PhnX family. As to quaternary structure, homodimer. Mg(2+) is required as a cofactor.

The catalysed reaction is phosphonoacetaldehyde + H2O = acetaldehyde + phosphate + H(+). In terms of biological role, involved in phosphonate degradation. The protein is Phosphonoacetaldehyde hydrolase of Aeromonas hydrophila subsp. hydrophila (strain ATCC 7966 / DSM 30187 / BCRC 13018 / CCUG 14551 / JCM 1027 / KCTC 2358 / NCIMB 9240 / NCTC 8049).